The primary structure comprises 254 residues: Membrane protein US20 (254 aa).

7 helical membrane-spanning segments follow: residues 31–51, 62–82, 89–109, 114–134, 143–163, 178–198, and 208–228; these read AIFIFQLAFSFGLGSVFWLGF, YSFFLTVLVPIVCMFITYTLG, ATVLFIYLLANSLTAAIFQMC, VLVGSYVMTLALFISFTGLAF, WKCISCVYVVMLLSFLTLALL, AFSISFFLGILAYDSLMVIFF, and AVCLYLDSMAIFLTLLLMLSG.

The protein localises to the host membrane. The polypeptide is Membrane protein US20 (US20) (Homo sapiens (Human)).